Here is a 343-residue protein sequence, read N- to C-terminus: Serine/threonine-protein kinase SRK2C (343 aa).

Residues 4–260 (YEIVKDIGSG…IEEIKNHSWF (257 aa)) form the Protein kinase domain. Residues 10-18 (IGSGNFGVA) and Lys-33 each bind ATP. Asp-123 functions as the Proton acceptor in the catalytic mechanism. Residue Thr-158 is modified to Phosphothreonine.

Belongs to the protein kinase superfamily. Ser/Thr protein kinase family. In terms of assembly, interacts with I-2 and TOPP1. As to expression, expressed in seedlings.

It carries out the reaction L-seryl-[protein] + ATP = O-phospho-L-seryl-[protein] + ADP + H(+). The enzyme catalyses L-threonyl-[protein] + ATP = O-phospho-L-threonyl-[protein] + ADP + H(+). Functionally, involved in gene regulation and confers tolerance to drought and osmotic stress. This chain is Serine/threonine-protein kinase SRK2C (SRK2C), found in Arabidopsis thaliana (Mouse-ear cress).